The sequence spans 164 residues: R-phycoerythrin alpha chain (164 aa).

(2R,3E)-phycoerythrobilin-binding residues include cysteine 82 and cysteine 139.

The protein belongs to the phycobiliprotein family. In terms of assembly, heterodimer of an alpha and a beta chain. Contains two covalently linked bilin chromophores.

The protein localises to the plastid. It is found in the chloroplast thylakoid membrane. Its function is as follows. Light-harvesting photosynthetic bile pigment-protein from the phycobiliprotein complex. This chain is R-phycoerythrin alpha chain (cpeA), found in Porphyra purpurea (Red seaweed).